The primary structure comprises 328 residues: DNA-directed RNA polymerase subunit alpha (328 aa).

Residues 1-232 (MHNSLAELIK…QHLAILVDLK (232 aa)) form an alpha N-terminal domain (alpha-NTD) region. Positions 246-328 (FDPLLLHPVD…PPEGLKKLNQ (83 aa)) are alpha C-terminal domain (alpha-CTD).

It belongs to the RNA polymerase alpha chain family. In terms of assembly, homodimer. The RNAP catalytic core consists of 2 alpha, 1 beta, 1 beta' and 1 omega subunit. When a sigma factor is associated with the core the holoenzyme is formed, which can initiate transcription.

The catalysed reaction is RNA(n) + a ribonucleoside 5'-triphosphate = RNA(n+1) + diphosphate. DNA-dependent RNA polymerase catalyzes the transcription of DNA into RNA using the four ribonucleoside triphosphates as substrates. This is DNA-directed RNA polymerase subunit alpha from Methylococcus capsulatus (strain ATCC 33009 / NCIMB 11132 / Bath).